The following is a 130-amino-acid chain: Small ribosomal subunit protein uS8 (130 aa).

The protein belongs to the universal ribosomal protein uS8 family. Part of the 30S ribosomal subunit. Contacts proteins S5 and S12.

In terms of biological role, one of the primary rRNA binding proteins, it binds directly to 16S rRNA central domain where it helps coordinate assembly of the platform of the 30S subunit. This is Small ribosomal subunit protein uS8 from Haemophilus influenzae (strain 86-028NP).